The primary structure comprises 403 residues: Ribonuclease T2-like (403 aa).

The N-terminal stretch at 1 to 19 (MLALILTISICIFLKGSTC) is a signal peptide. 4 cysteine pairs are disulfide-bonded: C36–C55, C44–C91, C54–C158, and C99–C150. The N-linked (GlcNAc...) asparagine glycan is linked to N78. Residues H84, E143, and H147 contribute to the active site. N175 carries N-linked (GlcNAc...) asparagine glycosylation. C224 and C259 are joined by a disulfide. Residues 268–288 (PKNGFNPGPQPPKSPRKGYLE) form a disordered region.

It belongs to the RNase T2 family.

The protein localises to the vacuole lumen. It localises to the cytoplasm. It catalyses the reaction a ribonucleotidyl-ribonucleotide-RNA + H2O = a 3'-end 3'-phospho-ribonucleotide-RNA + a 5'-end dephospho-ribonucleoside-RNA + H(+). Rnase which modulates cell survival under stress conditions. Released from the vacuole to the cytoplasm during stress to promote tRNA and rRNA cleavage and to activate separately a downstream pathway that promotes cell death. Involved in cell size, vacuolar morphology and growth at high temperatures and high salt concentration. The protein is Ribonuclease T2-like (RNY1) of Debaryomyces hansenii (strain ATCC 36239 / CBS 767 / BCRC 21394 / JCM 1990 / NBRC 0083 / IGC 2968) (Yeast).